The primary structure comprises 206 residues: Type III pantothenate kinase (206 aa).

Position 5–12 (5–12 (DIGNSTAK)) interacts with ATP. Residues tyrosine 67 and 72–75 (GVDR) each bind substrate. Residue aspartate 74 is the Proton acceptor of the active site. K(+) is bound at residue aspartate 89. Serine 92 serves as a coordination point for ATP. Threonine 144 is a binding site for substrate.

The protein belongs to the type III pantothenate kinase family. Homodimer. NH4(+) serves as cofactor. K(+) is required as a cofactor.

Its subcellular location is the cytoplasm. The enzyme catalyses (R)-pantothenate + ATP = (R)-4'-phosphopantothenate + ADP + H(+). It functions in the pathway cofactor biosynthesis; coenzyme A biosynthesis; CoA from (R)-pantothenate: step 1/5. Functionally, catalyzes the phosphorylation of pantothenate (Pan), the first step in CoA biosynthesis. The polypeptide is Type III pantothenate kinase (Campylobacter hominis (strain ATCC BAA-381 / DSM 21671 / CCUG 45161 / LMG 19568 / NCTC 13146 / CH001A)).